Here is a 350-residue protein sequence, read N- to C-terminus: Ribosomal RNA small subunit methyltransferase C (350 aa).

This sequence belongs to the methyltransferase superfamily. RsmC family. Monomer.

It is found in the cytoplasm. The enzyme catalyses guanosine(1207) in 16S rRNA + S-adenosyl-L-methionine = N(2)-methylguanosine(1207) in 16S rRNA + S-adenosyl-L-homocysteine + H(+). Its function is as follows. Specifically methylates the guanine in position 1207 of 16S rRNA in the 30S particle. This is Ribosomal RNA small subunit methyltransferase C from Sodalis glossinidius (strain morsitans).